Here is a 195-residue protein sequence, read N- to C-terminus: MMKHLLSIFFIGALLLGNIKTSEGSLSSALETTPGSLLSDLWLDRFPDPFKILERIPLGLERDTSVALSPARVDWKETAEGHEIMLDIPGLKKDEVKIEVEENGVLRVSGERKREEEKKGDQWHRVERSYGKFWRQFKLPDNVDMESVKAKLENGVLTINLTKLSPEKVKGPRVVNIAAEEDQTAKISSSESKEL.

A signal peptide spans 1–21; that stretch reads MMKHLLSIFFIGALLLGNIKT. Residues 62 to 180 enclose the sHSP domain; it reads RDTSVALSPA…GPRVVNIAAE (119 aa). N160 carries N-linked (GlcNAc...) asparagine glycosylation.

This sequence belongs to the small heat shock protein (HSP20) family. In terms of assembly, may form oligomeric structures.

The protein resides in the endoplasmic reticulum. The protein is 22.0 kDa heat shock protein (HSP22.0) of Arabidopsis thaliana (Mouse-ear cress).